The following is a 76-amino-acid chain: Small ribosomal subunit protein bS18 (76 aa).

This sequence belongs to the bacterial ribosomal protein bS18 family. As to quaternary structure, part of the 30S ribosomal subunit. Forms a tight heterodimer with protein bS6.

In terms of biological role, binds as a heterodimer with protein bS6 to the central domain of the 16S rRNA, where it helps stabilize the platform of the 30S subunit. In Pseudomonas entomophila (strain L48), this protein is Small ribosomal subunit protein bS18.